Here is a 416-residue protein sequence, read N- to C-terminus: Ribulose bisphosphate carboxylase large chain (416 aa).

Substrate is bound by residues Asn102 and Thr152. Lys154 acts as the Proton acceptor in catalysis. Lys156 is a substrate binding site. Mg(2+) is bound by residues Lys180, Asp182, and Glu183. Lys180 is subject to N6-carboxylysine. The active-site Proton acceptor is His273. Positions 274, 306, and 358 each coordinate substrate.

This sequence belongs to the RuBisCO large chain family. Type I subfamily. Heterohexadecamer of 8 large chains and 8 small chains; disulfide-linked. The disulfide link is formed within the large subunit homodimers. Mg(2+) serves as cofactor. The disulfide bond which can form in the large chain dimeric partners within the hexadecamer appears to be associated with oxidative stress and protein turnover.

The protein resides in the plastid. It localises to the chloroplast. It catalyses the reaction 2 (2R)-3-phosphoglycerate + 2 H(+) = D-ribulose 1,5-bisphosphate + CO2 + H2O. The enzyme catalyses D-ribulose 1,5-bisphosphate + O2 = 2-phosphoglycolate + (2R)-3-phosphoglycerate + 2 H(+). In terms of biological role, ruBisCO catalyzes two reactions: the carboxylation of D-ribulose 1,5-bisphosphate, the primary event in carbon dioxide fixation, as well as the oxidative fragmentation of the pentose substrate in the photorespiration process. Both reactions occur simultaneously and in competition at the same active site. This is Ribulose bisphosphate carboxylase large chain (rbcL) from Arthropteris beckleri (Fern).